Reading from the N-terminus, the 137-residue chain is Nucleoside diphosphate kinase (137 aa).

Lysine 10, phenylalanine 58, arginine 86, threonine 92, arginine 103, and asparagine 113 together coordinate ATP. The active-site Pros-phosphohistidine intermediate is the histidine 116.

Belongs to the NDK family. Homotetramer. The cofactor is Mg(2+).

It is found in the cytoplasm. The catalysed reaction is a 2'-deoxyribonucleoside 5'-diphosphate + ATP = a 2'-deoxyribonucleoside 5'-triphosphate + ADP. It catalyses the reaction a ribonucleoside 5'-diphosphate + ATP = a ribonucleoside 5'-triphosphate + ADP. Functionally, major role in the synthesis of nucleoside triphosphates other than ATP. The ATP gamma phosphate is transferred to the NDP beta phosphate via a ping-pong mechanism, using a phosphorylated active-site intermediate. This chain is Nucleoside diphosphate kinase, found in Helicobacter pylori (strain P12).